A 772-amino-acid chain; its full sequence is NAD(P)H-quinone oxidoreductase subunit 5, chloroplastic (772 aa).

16 consecutive transmembrane segments (helical) span residues 9–29, 40–60, 89–109, 125–145, 147–167, 185–205, 220–240, 259–279, 290–312, 328–348, 355–375, 397–417, 426–446, 550–570, 604–624, and 731–751; these read WIIP…LLLF, WSFP…YLSI, IDPL…LVLF, FAYL…SNLI, IYIF…FWFT, GDFG…SFEF, NQVH…GAVA, TPIS…FLVA, YIMN…LALA, LGYM…FHLI, ALLF…VGYS, TAFL…CFWS, WLYS…TAFY, LFSL…GIPF, FVTN…IATF, and IFIF…FFVL.

The protein belongs to the complex I subunit 5 family. NDH is composed of at least 16 different subunits, 5 of which are encoded in the nucleus.

It is found in the plastid. It localises to the chloroplast thylakoid membrane. It carries out the reaction a plastoquinone + NADH + (n+1) H(+)(in) = a plastoquinol + NAD(+) + n H(+)(out). The enzyme catalyses a plastoquinone + NADPH + (n+1) H(+)(in) = a plastoquinol + NADP(+) + n H(+)(out). Its function is as follows. NDH shuttles electrons from NAD(P)H:plastoquinone, via FMN and iron-sulfur (Fe-S) centers, to quinones in the photosynthetic chain and possibly in a chloroplast respiratory chain. The immediate electron acceptor for the enzyme in this species is believed to be plastoquinone. Couples the redox reaction to proton translocation, and thus conserves the redox energy in a proton gradient. This is NAD(P)H-quinone oxidoreductase subunit 5, chloroplastic (ndhF) from Oenothera argillicola (Appalachian evening primrose).